The primary structure comprises 490 residues: N-succinylglutamate 5-semialdehyde dehydrogenase (490 aa).

223–228 is a binding site for NAD(+); the sequence is GSAGTG. Residues Glu246 and Cys280 contribute to the active site.

This sequence belongs to the aldehyde dehydrogenase family. AstD subfamily.

It carries out the reaction N-succinyl-L-glutamate 5-semialdehyde + NAD(+) + H2O = N-succinyl-L-glutamate + NADH + 2 H(+). Its pathway is amino-acid degradation; L-arginine degradation via AST pathway; L-glutamate and succinate from L-arginine: step 4/5. Its function is as follows. Catalyzes the NAD-dependent reduction of succinylglutamate semialdehyde into succinylglutamate. This chain is N-succinylglutamate 5-semialdehyde dehydrogenase, found in Serratia proteamaculans (strain 568).